A 270-amino-acid polypeptide reads, in one-letter code: tRNA pseudouridine synthase A (270 aa).

Asp-52 (nucleophile) is an active-site residue. Residue Tyr-110 participates in substrate binding.

The protein belongs to the tRNA pseudouridine synthase TruA family. As to quaternary structure, homodimer.

It catalyses the reaction uridine(38/39/40) in tRNA = pseudouridine(38/39/40) in tRNA. Functionally, formation of pseudouridine at positions 38, 39 and 40 in the anticodon stem and loop of transfer RNAs. In Paraburkholderia xenovorans (strain LB400), this protein is tRNA pseudouridine synthase A.